The following is a 356-amino-acid chain: Holliday junction branch migration complex subunit RuvB (356 aa).

A large ATPase domain (RuvB-L) region spans residues 4 to 191 (TDKLATEQRI…FGIVARLEFY (188 aa)). ATP contacts are provided by residues leucine 30, arginine 31, glycine 72, lysine 75, threonine 76, threonine 77, 138–140 (EDY), arginine 181, tyrosine 191, and arginine 228. Residue threonine 76 coordinates Mg(2+). The interval 192-262 (DAEQLSRIVR…VADAALAMLD (71 aa)) is small ATPAse domain (RuvB-S). Residues 265–356 (PVGFDLMDRK…RDEWDTPDGK (92 aa)) are head domain (RuvB-H). DNA contacts are provided by arginine 301, arginine 320, and arginine 325.

This sequence belongs to the RuvB family. In terms of assembly, homohexamer. Forms an RuvA(8)-RuvB(12)-Holliday junction (HJ) complex. HJ DNA is sandwiched between 2 RuvA tetramers; dsDNA enters through RuvA and exits via RuvB. An RuvB hexamer assembles on each DNA strand where it exits the tetramer. Each RuvB hexamer is contacted by two RuvA subunits (via domain III) on 2 adjacent RuvB subunits; this complex drives branch migration. In the full resolvosome a probable DNA-RuvA(4)-RuvB(12)-RuvC(2) complex forms which resolves the HJ.

Its subcellular location is the cytoplasm. The enzyme catalyses ATP + H2O = ADP + phosphate + H(+). In terms of biological role, the RuvA-RuvB-RuvC complex processes Holliday junction (HJ) DNA during genetic recombination and DNA repair, while the RuvA-RuvB complex plays an important role in the rescue of blocked DNA replication forks via replication fork reversal (RFR). RuvA specifically binds to HJ cruciform DNA, conferring on it an open structure. The RuvB hexamer acts as an ATP-dependent pump, pulling dsDNA into and through the RuvAB complex. RuvB forms 2 homohexamers on either side of HJ DNA bound by 1 or 2 RuvA tetramers; 4 subunits per hexamer contact DNA at a time. Coordinated motions by a converter formed by DNA-disengaged RuvB subunits stimulates ATP hydrolysis and nucleotide exchange. Immobilization of the converter enables RuvB to convert the ATP-contained energy into a lever motion, pulling 2 nucleotides of DNA out of the RuvA tetramer per ATP hydrolyzed, thus driving DNA branch migration. The RuvB motors rotate together with the DNA substrate, which together with the progressing nucleotide cycle form the mechanistic basis for DNA recombination by continuous HJ branch migration. Branch migration allows RuvC to scan DNA until it finds its consensus sequence, where it cleaves and resolves cruciform DNA. The chain is Holliday junction branch migration complex subunit RuvB from Burkholderia cenocepacia (strain HI2424).